Here is a 108-residue protein sequence, read N- to C-terminus: UPF0235 protein MM_0822 (108 aa).

It belongs to the UPF0235 family.

The protein is UPF0235 protein MM_0822 of Methanosarcina mazei (strain ATCC BAA-159 / DSM 3647 / Goe1 / Go1 / JCM 11833 / OCM 88) (Methanosarcina frisia).